The sequence spans 270 residues: 2-epi-5-epi-valiolone 7-phosphate 2-epimerase (270 aa).

Active-site proton donor/acceptor residues include glutamate 143 and glutamate 236.

Belongs to the hyi family.

The enzyme catalyses 2-epi-5-epi-valiolone 7-phosphate = 5-epi-valiolone 7-phosphate. In terms of biological role, involved in the biosynthesis of the alpha-glucosidase inhibitor acarbose. Catalyzes the 2-epimerisation of 2-epi-5-epivaliolone 7-phosphate to yield 5-epi-valiolone 7-phosphate. This Actinoplanes sp. (strain ATCC 31044 / CBS 674.73 / SE50/110) protein is 2-epi-5-epi-valiolone 7-phosphate 2-epimerase (acbO).